We begin with the raw amino-acid sequence, 588 residues long: Disabled homolog 1 (588 aa).

Residues 1–26 (MSTETELQVAVKTSAKKDSRKKGQDR) form a disordered region. Over residues 15–26 (AKKDSRKKGQDR) the composition is skewed to basic and acidic residues. In terms of domain architecture, PID spans 36–189 (KGEGVRYKAK…CEQAVYQTIL (154 aa)). Phosphotyrosine is present on residues tyrosine 198, tyrosine 220, and tyrosine 232. Disordered regions lie at residues 224–243 (TSQK…NSQP), 420–444 (LATV…QKMG), 451–470 (FQMV…PSLT), and 502–588 (LTPV…QDGS). Polar residues predominate over residues 424-436 (PGTNDSARSSPQS). Low complexity-rich tracts occupy residues 503–512 (TPVTSTTPST) and 523–534 (SSPSKSSASHVS). The residue at position 524 (serine 524) is a Phosphoserine; by CDK5. Residues 537-546 (TADDIFEEGF) are compositionally biased toward acidic residues.

Associates with the SH2 domains of SRC, FYN and ABL. Interacts (phosphorylated on tyrosine residues) with CRK and CRKL (via respective SH2 domain). Interacts with SIAH1, LRP8 and VLDLR. Interacts with LRP1. Interacts with APLP1 (via NPXY motif). Interacts with DAB2IP. Interacts with ZSWIM8. Phosphorylated by FYN on Tyr-198 and Tyr-220 upon reelin induction in embryonic neurons. Also found phosphorylated on Tyr-232 upon reelin induction. Also phosphorylated on Ser-524 independently of reelin signaling. Post-translationally, ubiquitinated by various cullin-5-RING E3 ubiquitin-protein ligase complexes (ECS complexes) following ligand-binding and phosphorylation, leading to its degradation. Ubiquitinated by the ECS(SOCS7) complex in the cortical plate of the developing cerebral cortex following ligand-binding and phosphorylation by FYN, leading to its degradation by the proteasome. Recognized by ZSWIM8 through a disorder targets misorder mechanism that eliminates misfolded DAB1 via ubiquitination and proteasomal degradation. In terms of tissue distribution, expressed mainly in brain. Specifically expressin in cortical neurons.

It localises to the cytoplasm. In terms of biological role, signaling adapter of the reelin-mediated signaling pathway, which regulates the migration and differentiation of postmitotic neurons during brain development. Mediates intracellular transduction of Reelin signaling following reelin (RELN)-binding to its receptor: acts by docking proteins through its phosphotyrosine residues and PID domain. This Mus musculus (Mouse) protein is Disabled homolog 1.